The sequence spans 245 residues: NADH-quinone oxidoreductase subunit C (245 aa).

Residues 1-10 show a composition bias toward basic and acidic residues; the sequence is MSAPQDRTDD. Disordered regions lie at residues 1–54 and 216–245; these read MSAP…GYGG and PQRKDYPLGGVPVEYKGAEIPPPDRRRSYQ. Low complexity predominate over residues 11 to 28; the sequence is GGVPVPVTPAGATGGAPA. Over residues 39-54 the composition is skewed to gly residues; that stretch reads GMFGDQGTGDVSGYGG.

The protein belongs to the complex I 30 kDa subunit family. In terms of assembly, NDH-1 is composed of 14 different subunits. Subunits NuoB, C, D, E, F, and G constitute the peripheral sector of the complex.

The protein resides in the cell membrane. The catalysed reaction is a quinone + NADH + 5 H(+)(in) = a quinol + NAD(+) + 4 H(+)(out). In terms of biological role, NDH-1 shuttles electrons from NADH, via FMN and iron-sulfur (Fe-S) centers, to quinones in the respiratory chain. The immediate electron acceptor for the enzyme in this species is believed to be a menaquinone. Couples the redox reaction to proton translocation (for every two electrons transferred, four hydrogen ions are translocated across the cytoplasmic membrane), and thus conserves the redox energy in a proton gradient. The sequence is that of NADH-quinone oxidoreductase subunit C from Salinispora tropica (strain ATCC BAA-916 / DSM 44818 / JCM 13857 / NBRC 105044 / CNB-440).